Consider the following 186-residue polypeptide: Ribosome-recycling factor (186 aa).

Belongs to the RRF family.

It is found in the cytoplasm. Responsible for the release of ribosomes from messenger RNA at the termination of protein biosynthesis. May increase the efficiency of translation by recycling ribosomes from one round of translation to another. The chain is Ribosome-recycling factor from Rhizobium leguminosarum bv. trifolii (strain WSM2304).